Consider the following 1238-residue polypeptide: ATP-dependent helicase/nuclease subunit A (1238 aa).

The UvrD-like helicase ATP-binding domain occupies 6-474 (TKWTETQKSA…IKLSENFRSR (469 aa)). 27–34 (AGAGTGKT) lines the ATP pocket. Residues 512–811 (PFEGNCGGDV…RIMSIHKSKG (300 aa)) form the UvrD-like helicase C-terminal domain.

It belongs to the helicase family. AddA subfamily. Heterodimer of AddA and AddB/RexB. Mg(2+) serves as cofactor.

It carries out the reaction Couples ATP hydrolysis with the unwinding of duplex DNA by translocating in the 3'-5' direction.. The catalysed reaction is ATP + H2O = ADP + phosphate + H(+). Functionally, the heterodimer acts as both an ATP-dependent DNA helicase and an ATP-dependent, dual-direction single-stranded exonuclease. Recognizes the chi site generating a DNA molecule suitable for the initiation of homologous recombination. The AddA nuclease domain is required for chi fragment generation; this subunit has the helicase and 3' -&gt; 5' nuclease activities. The polypeptide is ATP-dependent helicase/nuclease subunit A (Clostridium kluyveri (strain NBRC 12016)).